The following is a 601-amino-acid chain: Molybdenum cofactor synthesis protein cinnamon (601 aa).

An MPT adenylyltransferase region spans residues 3–153 (SITFGVLTIS…TISALLPHAV (151 aa)). Residues 173-195 (SAQKSHICPHKTGTGTDSDRNSP) form a disordered region. The tract at residues 184 to 596 (TGTGTDSDRN…FPASVLRFDF (413 aa)) is MPT Mo-transferase. The residue at position 376 (Ser376) is a Phosphoserine.

This sequence in the N-terminal section; belongs to the MoaB/Mog family. In the C-terminal section; belongs to the MoeA family. The cofactor is Mg(2+).

It catalyses the reaction molybdopterin + ATP + H(+) = adenylyl-molybdopterin + diphosphate. The enzyme catalyses adenylyl-molybdopterin + molybdate = Mo-molybdopterin + AMP + H(+). The protein operates within cofactor biosynthesis; molybdopterin biosynthesis. Functionally, catalyzes two steps in the biosynthesis of the molybdenum cofactor. In the first step, molybdopterin is adenylated. Subsequently, molybdate is inserted into adenylated molybdopterin and AMP is released. The chain is Molybdenum cofactor synthesis protein cinnamon (cin) from Drosophila melanogaster (Fruit fly).